The sequence spans 398 residues: Carbamoyl phosphate synthase small chain (398 aa).

The interval 1-204 (MSPLLPSFPP…PAYGTLDTGK (204 aa)) is CPSase. The L-glutamine site is built by serine 53, glycine 256, and glycine 258. Residues 208-395 (KVVAYDFGVK…VELMNAASKK (188 aa)) form the Glutamine amidotransferase type-1 domain. The Nucleophile role is filled by cysteine 284. L-glutamine contacts are provided by leucine 285, glutamine 288, asparagine 326, glycine 328, and phenylalanine 329. Active-site residues include histidine 368 and glutamate 370.

It belongs to the CarA family. In terms of assembly, composed of two chains; the small (or glutamine) chain promotes the hydrolysis of glutamine to ammonia, which is used by the large (or ammonia) chain to synthesize carbamoyl phosphate. Tetramer of heterodimers (alpha,beta)4.

The catalysed reaction is hydrogencarbonate + L-glutamine + 2 ATP + H2O = carbamoyl phosphate + L-glutamate + 2 ADP + phosphate + 2 H(+). It catalyses the reaction L-glutamine + H2O = L-glutamate + NH4(+). It functions in the pathway amino-acid biosynthesis; L-arginine biosynthesis; carbamoyl phosphate from bicarbonate: step 1/1. It participates in pyrimidine metabolism; UMP biosynthesis via de novo pathway; (S)-dihydroorotate from bicarbonate: step 1/3. Functionally, small subunit of the glutamine-dependent carbamoyl phosphate synthetase (CPSase). CPSase catalyzes the formation of carbamoyl phosphate from the ammonia moiety of glutamine, carbonate, and phosphate donated by ATP, constituting the first step of 2 biosynthetic pathways, one leading to arginine and/or urea and the other to pyrimidine nucleotides. The small subunit (glutamine amidotransferase) binds and cleaves glutamine to supply the large subunit with the substrate ammonia. This Polynucleobacter necessarius subsp. necessarius (strain STIR1) protein is Carbamoyl phosphate synthase small chain.